The primary structure comprises 538 residues: MEKLLKKLPFYDHTWFNFLRFLIGNFIKDDGQQKAASLTYTTLLSIVPILTVLLMILSSVPALESVREQISNIIYSNLLPQSGLQVSEYINNFAEKSSNLTAIGALALFVTTIMTLTTIERAFNQIWRVEDRSGGIKSIVRYWTIITLGPLVLGTAFLVSSAVQSLSFLNQQVAGYGIDWGFWVQVVSFAVTIAGFIGMYWFIPKAKVPLKNAAIAGVFVAVTFELLKYSFGIIMSNFTSYEAIYGAFAALPIFLLWIYLSWNLILLGVEISYTLTIFATSEVYPRHPLLSLLDMLNLVHDRYQQGKDTSEEDLRSVLGRKELPKWFTYLNYLKDAHLITETDEGNYVLKKDLDNITLWEFYRTLPYPLPIKDELDEVCANARTPWLSLLVQRFVQTEKHARQELDIPLAKIFAHSLPREKVEVSHSVFSAQDADAKRTTSQSTTAEGGRQSAAEDGKFDAQPFDPNADVLPDSDSKEATNPPDADIKAAAAKGTVNSAQHSKHTETAKQEHKKTGLLGLFSHDKDAPIITEDDNPNK.

Transmembrane regions (helical) follow at residues 43–63 (LLSIVPILTVLLMILSSVPAL), 100–120 (LTAIGALALFVTTIMTLTTIE), 143–163 (WTIITLGPLVLGTAFLVSSAV), 183–203 (WVQVVSFAVTIAGFIGMYWFI), 215–235 (IAGVFVAVTFELLKYSFGIIM), and 247–267 (AFAALPIFLLWIYLSWNLILL). The segment at 427 to 538 (SVFSAQDADA…IITEDDNPNK (112 aa)) is disordered. Over residues 482–493 (PPDADIKAAAAK) the composition is skewed to low complexity. Residues 503–514 (KHTETAKQEHKK) are compositionally biased toward basic and acidic residues.

This sequence belongs to the UPF0761 family.

Its subcellular location is the cell inner membrane. This Psychrobacter sp. (strain PRwf-1) protein is UPF0761 membrane protein PsycPRwf_0630.